We begin with the raw amino-acid sequence, 279 residues long: Thymidylate synthase (279 aa).

R29 serves as a coordination point for dUMP. (6R)-5,10-methylene-5,6,7,8-tetrahydrofolate is bound at residue H59. 134 to 135 (RR) contacts dUMP. C154 functions as the Nucleophile in the catalytic mechanism. Residues 181-184 (RSAD), N192, and 222-224 (HIY) each bind dUMP. Position 184 (D184) interacts with (6R)-5,10-methylene-5,6,7,8-tetrahydrofolate. A (6R)-5,10-methylene-5,6,7,8-tetrahydrofolate-binding site is contributed by A278.

The protein belongs to the thymidylate synthase family. Bacterial-type ThyA subfamily. In terms of assembly, homodimer.

It localises to the cytoplasm. It catalyses the reaction dUMP + (6R)-5,10-methylene-5,6,7,8-tetrahydrofolate = 7,8-dihydrofolate + dTMP. It participates in pyrimidine metabolism; dTTP biosynthesis. Its function is as follows. Catalyzes the reductive methylation of 2'-deoxyuridine-5'-monophosphate (dUMP) to 2'-deoxythymidine-5'-monophosphate (dTMP) while utilizing 5,10-methylenetetrahydrofolate (mTHF) as the methyl donor and reductant in the reaction, yielding dihydrofolate (DHF) as a by-product. This enzymatic reaction provides an intracellular de novo source of dTMP, an essential precursor for DNA biosynthesis. This chain is Thymidylate synthase, found in Paracidovorax citrulli (strain AAC00-1) (Acidovorax citrulli).